A 126-amino-acid chain; its full sequence is Protein ApaG (126 aa).

An ApaG domain is found at aspartate 2–asparagine 126.

The polypeptide is Protein ApaG (Vibrio cholerae serotype O1 (strain ATCC 39541 / Classical Ogawa 395 / O395)).